Reading from the N-terminus, the 168-residue chain is NADH dehydrogenase [ubiquinone] 1 alpha subcomplex assembly factor 2 (168 aa).

The disordered stretch occupies residues 112 to 168 (GKETSEELLPSPTATQVKGHASAPYFGREEPSVAPTSTGKTFQPGSWTPEDGKRQSQ). Position 133 is a phosphoserine (Ser-133). Residues 145–157 (APTSTGKTFQPGS) show a composition bias toward polar residues.

The protein belongs to the complex I NDUFA12 subunit family. In terms of assembly, interacts with ARMC9.

It is found in the mitochondrion. Its function is as follows. Acts as a molecular chaperone for mitochondrial complex I assembly. Complex I functions in the transfer of electrons from NADH to the respiratory chain. The immediate electron acceptor for the enzyme is believed to be ubiquinone. Is involved in the initial steps of cilia formation, including removal of CP110 from the mother centrioles, docking of membrane vesicles to the mother centrioles, and establishment of the transition zone. The chain is NADH dehydrogenase [ubiquinone] 1 alpha subcomplex assembly factor 2 (Ndufaf2) from Mus musculus (Mouse).